The chain runs to 274 residues: MLEAKLNNASILKKLFECIKDLVNDANVDADESGLKLQALDGNHVSLVSLHLLDSGFSHYRCDRERVLGVNIASLNKVFKLCGANESVVISSKDDEDNLNFVFENNKEDKVTNFSLKLMSIELDSLNIPDCEEGFDAEVELSSKELTNIFRNLSEFSDTVFIEIDSNCIKFTTKGIVGDAEVALKPRDSTSEDDIGVTIKSKKKIKQSFAIKYLNLFSKSNILADVVVLGLSDSRPIEFKYEIKDTSPDSDTLKIGFVKFFLAPKMDDDMDNKD.

Residues 61 to 80 (RCDRERVLGVNIASLNKVFK) mediate DNA binding.

It belongs to the PCNA family. Homotrimer. Interacts with ORC1 (via PIP-box motif); the interaction occurs during DNA replication in trophozoites. Interacts with ORC5; the interaction occurs during the trophozoite stage but not at the late schizont stage. Interacts with FEN1.

The protein resides in the nucleus. The protein localises to the chromosome. Its subcellular location is the cytoplasm. Functionally, auxiliary protein of DNA polymerase delta and is involved in the control of DNA replication by increasing the polymerase processibility during elongation of the leading strand. Involved in DNA damage response. This is Proliferating cell nuclear antigen 1 from Plasmodium falciparum (isolate 3D7).